A 159-amino-acid polypeptide reads, in one-letter code: Ribosomal RNA large subunit methyltransferase H (159 aa).

Residues L76, G108, and 127 to 132 each bind S-adenosyl-L-methionine; that span reads FGRMTY.

The protein belongs to the RNA methyltransferase RlmH family. In terms of assembly, homodimer.

It is found in the cytoplasm. The enzyme catalyses pseudouridine(1915) in 23S rRNA + S-adenosyl-L-methionine = N(3)-methylpseudouridine(1915) in 23S rRNA + S-adenosyl-L-homocysteine + H(+). Its function is as follows. Specifically methylates the pseudouridine at position 1915 (m3Psi1915) in 23S rRNA. This Carboxydothermus hydrogenoformans (strain ATCC BAA-161 / DSM 6008 / Z-2901) protein is Ribosomal RNA large subunit methyltransferase H.